We begin with the raw amino-acid sequence, 617 residues long: Dihydroxy-acid dehydratase (617 aa).

Asp-81 contributes to the Mg(2+) binding site. Cys-122 contacts [2Fe-2S] cluster. Mg(2+) contacts are provided by Asp-123 and Lys-124. Residue Lys-124 is modified to N6-carboxylysine. Residue Cys-197 coordinates [2Fe-2S] cluster. Glu-494 is a Mg(2+) binding site. The active-site Proton acceptor is Ser-520.

Belongs to the IlvD/Edd family. In terms of assembly, homodimer. [2Fe-2S] cluster serves as cofactor. The cofactor is Mg(2+).

The enzyme catalyses (2R)-2,3-dihydroxy-3-methylbutanoate = 3-methyl-2-oxobutanoate + H2O. The catalysed reaction is (2R,3R)-2,3-dihydroxy-3-methylpentanoate = (S)-3-methyl-2-oxopentanoate + H2O. Its pathway is amino-acid biosynthesis; L-isoleucine biosynthesis; L-isoleucine from 2-oxobutanoate: step 3/4. The protein operates within amino-acid biosynthesis; L-valine biosynthesis; L-valine from pyruvate: step 3/4. Functions in the biosynthesis of branched-chain amino acids. Catalyzes the dehydration of (2R,3R)-2,3-dihydroxy-3-methylpentanoate (2,3-dihydroxy-3-methylvalerate) into 2-oxo-3-methylpentanoate (2-oxo-3-methylvalerate) and of (2R)-2,3-dihydroxy-3-methylbutanoate (2,3-dihydroxyisovalerate) into 2-oxo-3-methylbutanoate (2-oxoisovalerate), the penultimate precursor to L-isoleucine and L-valine, respectively. The chain is Dihydroxy-acid dehydratase from Frankia casuarinae (strain DSM 45818 / CECT 9043 / HFP020203 / CcI3).